A 60-amino-acid polypeptide reads, in one-letter code: Potassium channel toxin alpha-KTx 29.2 (60 aa).

A signal peptide spans 1-28; sequence MKSVCGVLIILVVLTTMLSISTFSTVGA. 3 cysteine pairs are disulfide-bonded: cysteine 32–cysteine 51, cysteine 40–cysteine 56, and cysteine 44–cysteine 58.

Belongs to the short scorpion toxin superfamily. Potassium channel inhibitor family. Alpha-KTx 29 subfamily. In terms of tissue distribution, expressed by the venom gland.

The protein resides in the secreted. In terms of biological role, weakly inhibits the Kv1.3/KCNA3 channel (1 uM of thetoxin inhibits currents by 13.2%) and Kv7.1/KCNQ1 channel (10 uM of the toxin inhibits currents by 27.7%). This chain is Potassium channel toxin alpha-KTx 29.2, found in Lychas mucronatus (Chinese swimming scorpion).